A 554-amino-acid chain; its full sequence is Valerianol synthase TPS8 (554 aa).

Positions 288–292 (QHSVG) match the DDXXD motif motif. Residues D307, D311, D452, S456, and E460 each coordinate Mg(2+).

It belongs to the terpene synthase family. Mg(2+) is required as a cofactor.

It catalyses the reaction (2E,6E)-farnesyl diphosphate + H2O = valerianol + diphosphate. The protein operates within secondary metabolite biosynthesis; terpenoid biosynthesis. Functionally, terpene synthase that catalyzes the biosynthesis of the terpene valerianol. This Camellia sinensis (Tea plant) protein is Valerianol synthase TPS8.